We begin with the raw amino-acid sequence, 548 residues long: Copine-2 (548 aa).

C2 domains follow at residues 6–131 (DGGA…TRPL) and 138–263 (PAGK…PLEI). Positions 39, 45, 97, 99, 102, 109, 170, 176, 232, 234, and 240 each coordinate Ca(2+). Positions 247 to 304 (TSVLQMSEARDGVPLEIECINPKKQRKKKSYKNSGIIILRSCKIHRNYSFLDYILGGC) are linker region. The region spanning 305–507 (QLMFTVGIDF…AARDIVQFVP (203 aa)) is the VWFA domain.

Belongs to the copine family. Ca(2+) serves as cofactor.

The protein resides in the cytoplasm. It is found in the nucleus. It localises to the cell membrane. Calcium-dependent phospholipid-binding protein that plays a role in calcium-mediated intracellular processes. Exhibits calcium-dependent cell membrane binding properties. The protein is Copine-2 of Mus musculus (Mouse).